Consider the following 139-residue polypeptide: Phosphoribosyl-AMP cyclohydrolase (139 aa).

Mg(2+) is bound at residue Asp92. Cys93 contributes to the Zn(2+) binding site. Residues Asp94 and Asp96 each coordinate Mg(2+). Residues Cys111 and Cys118 each coordinate Zn(2+).

The protein belongs to the PRA-CH family. As to quaternary structure, homodimer. It depends on Mg(2+) as a cofactor. The cofactor is Zn(2+).

The protein resides in the cytoplasm. It catalyses the reaction 1-(5-phospho-beta-D-ribosyl)-5'-AMP + H2O = 1-(5-phospho-beta-D-ribosyl)-5-[(5-phospho-beta-D-ribosylamino)methylideneamino]imidazole-4-carboxamide. Its pathway is amino-acid biosynthesis; L-histidine biosynthesis; L-histidine from 5-phospho-alpha-D-ribose 1-diphosphate: step 3/9. Functionally, catalyzes the hydrolysis of the adenine ring of phosphoribosyl-AMP. This chain is Phosphoribosyl-AMP cyclohydrolase, found in Caulobacter vibrioides (strain ATCC 19089 / CIP 103742 / CB 15) (Caulobacter crescentus).